Here is a 354-residue protein sequence, read N- to C-terminus: NADH-quinone oxidoreductase subunit H (354 aa).

Helical transmembrane passes span 22 to 42 (ILIR…YLIL), 91 to 111 (YLIA…VIPF), 124 to 144 (LLYV…AGWA), 168 to 188 (MGFA…SAIV), 203 to 223 (ILSW…ISGV), 255 to 275 (LFFL…ALMF), 291 to 311 (IPGF…FIWI), and 326 to 346 (LGWK…AIWI).

The protein belongs to the complex I subunit 1 family. In terms of assembly, NDH-1 is composed of 14 different subunits. Subunits NuoA, H, J, K, L, M, N constitute the membrane sector of the complex.

The protein localises to the cell inner membrane. The catalysed reaction is a quinone + NADH + 5 H(+)(in) = a quinol + NAD(+) + 4 H(+)(out). In terms of biological role, NDH-1 shuttles electrons from NADH, via FMN and iron-sulfur (Fe-S) centers, to quinones in the respiratory chain. The immediate electron acceptor for the enzyme in this species is believed to be ubiquinone. Couples the redox reaction to proton translocation (for every two electrons transferred, four hydrogen ions are translocated across the cytoplasmic membrane), and thus conserves the redox energy in a proton gradient. This subunit may bind ubiquinone. This chain is NADH-quinone oxidoreductase subunit H, found in Cupriavidus taiwanensis (strain DSM 17343 / BCRC 17206 / CCUG 44338 / CIP 107171 / LMG 19424 / R1) (Ralstonia taiwanensis (strain LMG 19424)).